Reading from the N-terminus, the 556-residue chain is Set1/Ash2 histone methyltransferase complex subunit ASH2 (556 aa).

Residues 1-19 (MEDSQMDTSSPTESSSEVN) are compositionally biased toward polar residues. A disordered region spans residues 1 to 27 (MEDSQMDTSSPTESSSEVNFTAEEDKS). The PHD-type zinc-finger motif lies at 34 to 90 (AGVCYCGKERNLNIVELLCATCSRWVHETCVSYQLGKGKLLPFITNYVFVCKNCSAS). Residues Cys-37, Cys-39, Cys-52, Cys-55, His-60, Cys-63, Cys-84, and Cys-87 each contribute to the Zn(2+) site. Residues 216–251 (ASLSKNNRQKRKFPGTDSGPTGKKGRPSSDITANVK) are disordered. The B30.2/SPRY domain maps to 288 to 510 (SSDWAGKPIP…VSVNFGPAFK (223 aa)).

Core component of several methyltransferase-containing complexes. Component of the SET1C/COMPASS complex, composed at least of the catalytic subunit Set1, wds/WDR5, Wdr82, Rbbp5, ash2, Cfp1/CXXC1, hcf and Dpy-30L1. Component of the MLL3/4 (Histone-lysine N-methyltransferase/demethylase TRR) complex composed at least of the catalytic subunit trr, ash2, Rbbp5, Dpy-30L1, wds, hcf, ptip, Pa1, Utx, Lpt and Ncoa6. Interacts with hcf. Interacts with trr. As to quaternary structure, interacts (via B30.2/SPRY domain) with sktl; the interaction is direct. In larvae and pupae, expressed in imaginal disks, salivary gland and fat body cells. No expression detected in central nervous system (at protein level).

It localises to the nucleus. Its subcellular location is the chromosome. Transcriptional regulator. Regulates a number of genes involved in wing development including activation of net and bs and repression of rho and kni and controls vein-intervein patterning during wing development. Required for correct expression of a number of homeotic genes including Scr in the first leg imaginal disk and Ubx in the third leg imaginal disk and haltere disks. Required for stabilization of the histone-lysine N-methyltransferase trr and for trimethylation of 'Lys-4' of histone H3. Together with sktl probably plays a role in maintenance of transcriptionally active chromatin through down-regulation of histone H1 hyperphosphorylation. This is Set1/Ash2 histone methyltransferase complex subunit ASH2 from Drosophila melanogaster (Fruit fly).